Here is a 219-residue protein sequence, read N- to C-terminus: Isovaleryl-homoserine lactone synthase (219 aa).

Belongs to the autoinducer synthase family.

The enzyme catalyses 3-methylbutanoyl-CoA + S-adenosyl-L-methionine = N-isovaleryl-L-homoserine lactone + S-methyl-5'-thioadenosine + CoA + H(+). Functionally, catalyzes the synthesis of IV-HSL (isovaleryl-homoserine lactone), a quorum-sensing (QS) autoinducer molecule which binds to BjaR1 transcriptional regulator to activate expression of QS-dependent genes. Is active with isovaleryl-CoA but cannot use isovaleryl-ACP as acyl donor. This Bradyrhizobium diazoefficiens (strain JCM 10833 / BCRC 13528 / IAM 13628 / NBRC 14792 / USDA 110) protein is Isovaleryl-homoserine lactone synthase (bjaI).